The primary structure comprises 215 residues: Small ribosomal subunit protein uS3 (215 aa).

Residues 39–107 (VRQYLQKKLA…PVHINIEEIR (69 aa)) form the KH type-2 domain.

The protein belongs to the universal ribosomal protein uS3 family. Part of the 30S ribosomal subunit. Forms a tight complex with proteins S10 and S14.

In terms of biological role, binds the lower part of the 30S subunit head. Binds mRNA in the 70S ribosome, positioning it for translation. This is Small ribosomal subunit protein uS3 from Nitrosomonas europaea (strain ATCC 19718 / CIP 103999 / KCTC 2705 / NBRC 14298).